The primary structure comprises 643 residues: MIAATPMPLLKQPDRLEARLRELPAEPGVYFMRDASDRILYIGKSKKLRSRVRSYFRDLERLNPRINLMVRQVCEIEIIVTDTEAEALALEANLIKQHQPHFNVLLKDDKKYPYLCITWSDDYPRIFITRKRRLGNSRDRYYGPYVDTRLLRHTLFLVKRLFPLRQRPQPLFKDRTCLNYDIGRCPGVCQSLIRPDDYRKTLQKVAMIFQGRSSELVELLEAQMLQAAENLEFEKAAKIRDQIRGLEGLGAEQKVQLPDDRISRDAIALAMDEQHACIQLFQIRAGKLVGRLGFVADAQSGSAAAIAQRVLEEHYASVDSVEIPQEVLVQHDLPEAELLEVWLSERRGRKVEILSPQRQIKADLIAMVERNAEYELARTQQSAERHTASLIDLADLLDLPELPRRIEGYDISHIQGSDAVASQVVFIDGLPAKQHYRRYKIRNPEVRAGHSDDFASLAEVLHRRFRKFAEAKARGESLAPSEQRQGSLLRPDDLADFPDLVMIDGGKGQLSAVVEVLRNLNLLEDVKLCSLAKKREEIFLPGASDPLPTDAEQPGVQLLRRLRDEAHRFAVSFHRQKRTERMRRSRLDDIPGLGHKRQKELLAHFRSIDYLRLATPEQIAEVPGIGAVLAQQIWGYFHPSETA.

In terms of domain architecture, GIY-YIG spans 25 to 104; sequence AEPGVYFMRD…IKQHQPHFNV (80 aa). The UVR domain maps to 214-249; that stretch reads SELVELLEAQMLQAAENLEFEKAAKIRDQIRGLEGL.

It belongs to the UvrC family. In terms of assembly, interacts with UvrB in an incision complex.

The protein localises to the cytoplasm. In terms of biological role, the UvrABC repair system catalyzes the recognition and processing of DNA lesions. UvrC both incises the 5' and 3' sides of the lesion. The N-terminal half is responsible for the 3' incision and the C-terminal half is responsible for the 5' incision. The polypeptide is UvrABC system protein C (Synechococcus elongatus (strain ATCC 33912 / PCC 7942 / FACHB-805) (Anacystis nidulans R2)).